The sequence spans 237 residues: MEIIHLSEIDSTNDYAKELAKEGKRNFIVLADKQNNGKGRWGRVWYSDEGGLYFSMVLDSKLYNPKVINLLVPICIIEVLKNYVDKELGLKFPNDIMVKVNDNYKKLGGILTELTDDYMIIGIGINVNNQIRNEIREIAISLKEITGKELDKVEILSNFLKTFESYLEKLKNKEIDDYEILKKYKKYSITIGKQVKILLSNNEIITGKVYDIDFDGIVLGTEKGIERIPSGICIHVR.

The BPL/LPL catalytic domain maps to 1-191; sequence MEIIHLSEID…KKYKKYSITI (191 aa).

The protein belongs to the biotin--protein ligase family.

It catalyses the reaction biotin + L-lysyl-[protein] + ATP = N(6)-biotinyl-L-lysyl-[protein] + AMP + diphosphate + H(+). This is Putative biotin ligase from Methanocaldococcus jannaschii (strain ATCC 43067 / DSM 2661 / JAL-1 / JCM 10045 / NBRC 100440) (Methanococcus jannaschii).